The primary structure comprises 71 residues: Large ribosomal subunit protein bL31 (71 aa).

4 residues coordinate Zn(2+): C16, C18, C38, and C41.

The protein belongs to the bacterial ribosomal protein bL31 family. Type A subfamily. Part of the 50S ribosomal subunit. It depends on Zn(2+) as a cofactor.

Binds the 23S rRNA. This Neisseria meningitidis serogroup A / serotype 4A (strain DSM 15465 / Z2491) protein is Large ribosomal subunit protein bL31.